A 618-amino-acid polypeptide reads, in one-letter code: Dihydroxy-acid dehydratase (618 aa).

Residue D81 participates in Mg(2+) binding. Residue C122 coordinates [2Fe-2S] cluster. The Mg(2+) site is built by D123 and K124. The residue at position 124 (K124) is an N6-carboxylysine. Position 195 (C195) interacts with [2Fe-2S] cluster. Position 491 (E491) interacts with Mg(2+). S517 functions as the Proton acceptor in the catalytic mechanism.

The protein belongs to the IlvD/Edd family. In terms of assembly, homodimer. [2Fe-2S] cluster is required as a cofactor. It depends on Mg(2+) as a cofactor.

It catalyses the reaction (2R)-2,3-dihydroxy-3-methylbutanoate = 3-methyl-2-oxobutanoate + H2O. The catalysed reaction is (2R,3R)-2,3-dihydroxy-3-methylpentanoate = (S)-3-methyl-2-oxopentanoate + H2O. It functions in the pathway amino-acid biosynthesis; L-isoleucine biosynthesis; L-isoleucine from 2-oxobutanoate: step 3/4. Its pathway is amino-acid biosynthesis; L-valine biosynthesis; L-valine from pyruvate: step 3/4. Its function is as follows. Functions in the biosynthesis of branched-chain amino acids. Catalyzes the dehydration of (2R,3R)-2,3-dihydroxy-3-methylpentanoate (2,3-dihydroxy-3-methylvalerate) into 2-oxo-3-methylpentanoate (2-oxo-3-methylvalerate) and of (2R)-2,3-dihydroxy-3-methylbutanoate (2,3-dihydroxyisovalerate) into 2-oxo-3-methylbutanoate (2-oxoisovalerate), the penultimate precursor to L-isoleucine and L-valine, respectively. The chain is Dihydroxy-acid dehydratase from Rhodopseudomonas palustris (strain TIE-1).